A 287-amino-acid chain; its full sequence is Elongation factor Ts (287 aa).

The tract at residues 80–83 is involved in Mg(2+) ion dislocation from EF-Tu; that stretch reads TDFL.

The protein belongs to the EF-Ts family.

It localises to the cytoplasm. In terms of biological role, associates with the EF-Tu.GDP complex and induces the exchange of GDP to GTP. It remains bound to the aminoacyl-tRNA.EF-Tu.GTP complex up to the GTP hydrolysis stage on the ribosome. The chain is Elongation factor Ts from Pseudomonas savastanoi pv. phaseolicola (strain 1448A / Race 6) (Pseudomonas syringae pv. phaseolicola (strain 1448A / Race 6)).